The sequence spans 156 residues: ATP synthase subunit b (156 aa).

Residues 7–27 form a helical membrane-spanning segment; the sequence is FFAQMVVFFILWWVVAKFIWP.

Belongs to the ATPase B chain family. In terms of assembly, F-type ATPases have 2 components, F(1) - the catalytic core - and F(0) - the membrane proton channel. F(1) has five subunits: alpha(3), beta(3), gamma(1), delta(1), epsilon(1). F(0) has three main subunits: a(1), b(2) and c(10-14). The alpha and beta chains form an alternating ring which encloses part of the gamma chain. F(1) is attached to F(0) by a central stalk formed by the gamma and epsilon chains, while a peripheral stalk is formed by the delta and b chains.

The protein resides in the cell inner membrane. Its function is as follows. F(1)F(0) ATP synthase produces ATP from ADP in the presence of a proton or sodium gradient. F-type ATPases consist of two structural domains, F(1) containing the extramembraneous catalytic core and F(0) containing the membrane proton channel, linked together by a central stalk and a peripheral stalk. During catalysis, ATP synthesis in the catalytic domain of F(1) is coupled via a rotary mechanism of the central stalk subunits to proton translocation. In terms of biological role, component of the F(0) channel, it forms part of the peripheral stalk, linking F(1) to F(0). The protein is ATP synthase subunit b of Cupriavidus necator (strain ATCC 17699 / DSM 428 / KCTC 22496 / NCIMB 10442 / H16 / Stanier 337) (Ralstonia eutropha).